The sequence spans 257 residues: E3 ubiquitin-protein ligase RNF170 (257 aa).

Residues 1–24 (MADNQEGRPYFPLDEGSIIEGVSD) lie on the Lumenal side of the membrane. Residues 25–45 (QVIVVVLLSFVAVGSLLYLLL) form a helical membrane-spanning segment. The Cytoplasmic segment spans residues 46–200 (RNDEQNIHPE…GGLFWMFRIR (155 aa)). The segment at 87–130 (CPVCLQQATFPVETNCGHLFCGSCIIAYWRYGSWLGAINCPICR) adopts an RING-type zinc-finger fold. Residues 201–221 (IVLCLLGALFYLVSPLDIIPE) form a helical membrane-spanning segment. Residue Ala-222 is a topological domain, lumenal. A helical membrane pass occupies residues 223–243 (VFGLLGFLDDFFVLFLLLIYI). The Cytoplasmic segment spans residues 244 to 257 (SIMYREVVTQRLYR).

The protein resides in the endoplasmic reticulum membrane. The catalysed reaction is S-ubiquitinyl-[E2 ubiquitin-conjugating enzyme]-L-cysteine + [acceptor protein]-L-lysine = [E2 ubiquitin-conjugating enzyme]-L-cysteine + N(6)-ubiquitinyl-[acceptor protein]-L-lysine.. Its pathway is protein modification; protein ubiquitination. In terms of biological role, E3 ubiquitin-protein ligase that plays an essential role in stimulus-induced inositol 1,4,5-trisphosphate receptor (ITPR) ubiquitination and degradation via the endoplasmic reticulum-associated degradation (ERAD) pathway. Also involved in ITPR turnover in resting cells. This chain is E3 ubiquitin-protein ligase RNF170 (rnf170), found in Xenopus tropicalis (Western clawed frog).